Reading from the N-terminus, the 1383-residue chain is DNA-directed RNA polymerase subunit beta'' (1383 aa).

Residues Cys220, Cys289, Cys296, and Cys299 each coordinate Zn(2+).

Belongs to the RNA polymerase beta' chain family. RpoC2 subfamily. In plastids the minimal PEP RNA polymerase catalytic core is composed of four subunits: alpha, beta, beta', and beta''. When a (nuclear-encoded) sigma factor is associated with the core the holoenzyme is formed, which can initiate transcription. The cofactor is Zn(2+).

It is found in the plastid. Its subcellular location is the chloroplast. The catalysed reaction is RNA(n) + a ribonucleoside 5'-triphosphate = RNA(n+1) + diphosphate. Functionally, DNA-dependent RNA polymerase catalyzes the transcription of DNA into RNA using the four ribonucleoside triphosphates as substrates. This is DNA-directed RNA polymerase subunit beta'' from Oenothera elata subsp. hookeri (Hooker's evening primrose).